Consider the following 149-residue polypeptide: Calmodulin-6 (149 aa).

4 EF-hand domains span residues 8-43 (DQIS…LGQN), 44-79 (PTEA…KMKD), 81-116 (DSEE…LGEK), and 117-149 (LSDE…MMAK). Ca(2+) is bound by residues Asp21, Asp23, Asp25, Cys27, Glu32, Asp57, Asp59, Asn61, Thr63, Glu68, Asp94, Asp96, Asn98, Glu105, Asp130, Asp132, Asp134, Gln136, and Glu141.

Belongs to the calmodulin family. Interacts with KCBP.

Functionally, calmodulin mediates the control of a large number of enzymes, ion channels and other proteins by Ca(2+). Among the enzymes to be stimulated by the calmodulin-Ca(2+) complex are a number of protein kinases and phosphatases. In Arabidopsis thaliana (Mouse-ear cress), this protein is Calmodulin-6 (CAM6).